We begin with the raw amino-acid sequence, 43 residues long: uncharacterized protein (43 aa).

This is an uncharacterized protein from Sinorhizobium fredii (strain NBRC 101917 / NGR234).